The chain runs to 345 residues: MPGALSGRRMLPSGLCLGRWQLLRTIRARGRGDPRELPSTPQVLCMKLYGNPKYHQALHYGTVEPQDEITVTYKHGLPLVTLTLPSRKERCQFVVKPMLSTVGSFLQDLQNEDKGIKTAAIITADGSEIPASTLMDTLLMTDFKLIINKLRYDIRCHKKEEPSGEHMTELENTKSLVHRLFTILHLEEIQKRRERHLMAKIDHLQEQLRPLEQVKAAIEARSEANTSGLLWAGLALLSVQGGALAWLTWWVYSWDIMEPVTFFLSFANSIVFFAYFIITRQNYTYSSLRSRQFLQFFHKKSQRRCFDVEQYNKLKEDLAEATESLESVRRSLRLRIQGEEASEKN.

A mitochondrion-targeting transit peptide spans 1–44; that stretch reads MPGALSGRRMLPSGLCLGRWQLLRTIRARGRGDPRELPSTPQVL. Residues 188–221 are a coiled coil; the sequence is EIQKRRERHLMAKIDHLQEQLRPLEQVKAAIEAR. 2 helical membrane passes run 229-249 and 259-279; these read LLWAGLALLSVQGGALAWLTW and PVTFFLSFANSIVFFAYFIIT. Residues 306–334 adopt a coiled-coil conformation; sequence FDVEQYNKLKEDLAEATESLESVRRSLRL.

The protein belongs to the MCU (TC 1.A.77) family. In terms of assembly, homooligomer. Associates with the uniplex complex, composed of MCU, MICU1, MICU2 and EMRE/SMDT1, inhibiting its activity. Detected in lung, brain and heart, and at lower levels in white fat, skeletal muscle and spleen. Detected at very low levels in kidney and liver. Highly expressed in macrophages during the progression of skeletal muscle regeneration.

The protein resides in the mitochondrion inner membrane. In terms of biological role, negative regulator of the mitochondrial calcium uniporter (MCU), a channel that mediates calcium uptake into the mitochondrial matrix. MCUB is required to limit mitochondrial calcium overload during stress. Acts as a dominant-negative regulator that displaces MCU from the functional uniplex complex and thereby decreases the association of calcium sensors MICU1 and MICU2, preventing channel gating. Mitochondrial calcium homeostasis plays key roles in mitochondrial metabolism. Acts as an important regulator of mitochondrial metabolism in response to stress in muscle cells: induced in response to fasting, leading to restrict mitochondrial calcium uptake, resulting in reprogramming of mitochondria toward fatty acid oxidation preference. Acts as a regulator of macrophage polarization during skeletal muscle regeneration: inhibition of mitochondrial calcium uptake drives differentiation of macrophages with anti-inflammatory profile, promoting the differentiation and fusion of satellite cells. This is Calcium uniporter regulatory subunit MCUb, mitochondrial from Mus musculus (Mouse).